We begin with the raw amino-acid sequence, 630 residues long: tRNA uridine 5-carboxymethylaminomethyl modification enzyme MnmG (630 aa).

13–18 contributes to the FAD binding site; the sequence is GGGHAG. 273–287 contacts NAD(+); it reads GPRYCPSIEDKIHRF.

The protein belongs to the MnmG family. As to quaternary structure, homodimer. Heterotetramer of two MnmE and two MnmG subunits. FAD is required as a cofactor.

It is found in the cytoplasm. In terms of biological role, NAD-binding protein involved in the addition of a carboxymethylaminomethyl (cmnm) group at the wobble position (U34) of certain tRNAs, forming tRNA-cmnm(5)s(2)U34. The chain is tRNA uridine 5-carboxymethylaminomethyl modification enzyme MnmG from Pseudomonas putida (strain W619).